A 102-amino-acid polypeptide reads, in one-letter code: Serum amyloid A-5 protein (102 aa).

A disordered region spans residues 68–102; that stretch reads GRGHEDSMADQEANRWGRSGNDPNHYRPAGLPDKY. Over residues 69–82 the composition is skewed to basic and acidic residues; it reads RGHEDSMADQEANR.

The protein belongs to the SAA family. As to expression, expressed by the liver; secreted in plasma.

Its subcellular location is the secreted. Its function is as follows. Major acute phase reactant. Apolipoprotein of the HDL complex. The chain is Serum amyloid A-5 protein from Mesocricetus auratus (Golden hamster).